Here is a 250-residue protein sequence, read N- to C-terminus: MADS-box protein J2 (250 aa).

An MADS-box domain is found at 1-61 (MGRGRVELKR…GKLYEFSSAS (61 aa)). Residues 87–177 (TQMNYNEYVR…KNKLEESAAR (91 aa)) form the K-box domain.

It is found in the nucleus. Functionally, MADS-box transcription factor that acts redundantly with EJ2 to control meristem maturation and inflorescence architecture. This Solanum lycopersicum (Tomato) protein is MADS-box protein J2.